The primary structure comprises 64 residues: MARRDQLTGKGPLSGNTRSHAMNHSKRRWNVNLQKATIKTENGSQRVLVSAKTLKTLKKHNLLA.

The interval 1–26 (MARRDQLTGKGPLSGNTRSHAMNHSK) is disordered.

It belongs to the bacterial ribosomal protein bL28 family.

In Ureaplasma urealyticum serovar 10 (strain ATCC 33699 / Western), this protein is Large ribosomal subunit protein bL28.